Reading from the N-terminus, the 225-residue chain is Heptaprenylglyceryl phosphate synthase (225 aa).

Position 6 (Lys6) interacts with sn-glycerol 1-phosphate. Asp8 and Thr34 together coordinate Mg(2+). Sn-glycerol 1-phosphate-binding positions include 153–158 (YVEYSG), Gly183, and 203–204 (GN).

Belongs to the GGGP/HepGP synthase family. Group I subfamily. As to quaternary structure, homodimer. The cofactor is Mg(2+).

It carries out the reaction sn-glycerol 1-phosphate + all-trans-heptaprenyl diphosphate = 3-heptaprenyl-sn-glycero-1-phosphate + diphosphate. The protein operates within membrane lipid metabolism; glycerophospholipid metabolism. Functionally, prenyltransferase that catalyzes in vivo the transfer of the heptaprenyl moiety of heptaprenyl pyrophosphate (HepPP; 35 carbon atoms) to the C3 hydroxyl of sn-glycerol-1-phosphate (G1P), producing heptaprenylglyceryl phosphate (HepGP). This reaction is an ether-bond-formation step in the biosynthesis of archaea-type G1P-based membrane lipids found in Bacillales. This is Heptaprenylglyceryl phosphate synthase from Listeria monocytogenes serotype 4b (strain F2365).